We begin with the raw amino-acid sequence, 704 residues long: MAKITKTFQYGKHTVTLETGEIARQAGGAVIVKFDDTVLLVTAVAAKSAREGQDFFPLTVDYQEKFYAGGRIPGGFFKREGRATEKETLISRLIDRPIRPLFPEDYKNEVQIIATVMSMNPDIDGDIAALIGASAALSLAGTPFNGPIAAAKVGYKNGEYILNPTVTDLKDSQLELVVAGTANAVLMVESEAELLSEEVMLGAVTFGHREMQKVINIINELAVEAGTKPSDWVAPAKNDGMIAALKEAVGDQLASAFQVRDKLQRRDAISAIKKDVLGALAPRATIEGWAAGDLAKEFGELEYQTMRGSVLSTKVRIDGRALDTVRPISAKAGVLPRTHGSALFTRGETQAIVITTLGTARDGQVIDAVSGEYKENFLFHYNFPPYSVGECGRFGAPKRREIGHGRLAKRGVLAVMPSLEEFPYTIRVVSEITESNGSSSMASVCGSSLALMDAGVPIKAPVAGIAMGLVKEGNDFVVLSDILGDEDHLGDMDFKVAGTAEGVSALQMDIKIEGITEEIMKQALQQAKAGRLHILGEMAHALTTPRQELSDYAPRLLTIKIHPDKIREVIGKGGSTIQAITKETGTQIDIQDDGTIIIASVNAIAAQAAKSRIEQITSDVEPGRIYEGKVAKIMDFGAFVTILPGKDGLVHVSQISSERVEKVGDKLKEGDLVRVKVLEVDKQGRIRLSIKAVEEGEGVPASAE.

Mg(2+) is bound by residues D487 and D493. Residues 554-613 (PRLLTIKIHPDKIREVIGKGGSTIQAITKETGTQIDIQDDGTIIIASVNAIAAQAAKSRI) enclose the KH domain. In terms of domain architecture, S1 motif spans 623 to 691 (GRIYEGKVAK…KQGRIRLSIK (69 aa)).

The protein belongs to the polyribonucleotide nucleotidyltransferase family. In terms of assembly, component of the RNA degradosome, which is a multiprotein complex involved in RNA processing and mRNA degradation. Mg(2+) is required as a cofactor.

The protein resides in the cytoplasm. The enzyme catalyses RNA(n+1) + phosphate = RNA(n) + a ribonucleoside 5'-diphosphate. Its function is as follows. Involved in mRNA degradation. Catalyzes the phosphorolysis of single-stranded polyribonucleotides processively in the 3'- to 5'-direction. In Xanthomonas oryzae pv. oryzae (strain MAFF 311018), this protein is Polyribonucleotide nucleotidyltransferase.